The sequence spans 192 residues: Epididymal-specific lipocalin-5 (192 aa).

A signal peptide spans 1-26 (MCSVARHMESIMLFTLLGLCVGLAAG). Cys-89 and Cys-183 are oxidised to a cystine.

Belongs to the calycin superfamily. Lipocalin family. Post-translationally, 2 different forms with differently processed N-termini exist. As to expression, epididymal fluid of the caudal and corpus regions (at protein level).

It localises to the secreted. Associates with spermatozoa in the epididymal fluid but does not bind tightly to them. Binds both all-trans and 13-cis retinoic acid. May act as a retinoid carrier protein which is required for epididymal function and/or sperm maturation. The polypeptide is Epididymal-specific lipocalin-5 (Mus musculus (Mouse)).